A 151-amino-acid polypeptide reads, in one-letter code: Large ribosomal subunit protein eL8 (151 aa).

It belongs to the eukaryotic ribosomal protein eL8 family. As to quaternary structure, part of the 50S ribosomal subunit. Probably part of the RNase P complex.

It localises to the cytoplasm. Functionally, multifunctional RNA-binding protein that recognizes the K-turn motif in ribosomal RNA, the RNA component of RNase P, box H/ACA, box C/D and box C'/D' sRNAs. In Pyrobaculum aerophilum (strain ATCC 51768 / DSM 7523 / JCM 9630 / CIP 104966 / NBRC 100827 / IM2), this protein is Large ribosomal subunit protein eL8.